A 151-amino-acid polypeptide reads, in one-letter code: Nucleoside diphosphate kinase (151 aa).

Lys11, Phe59, Arg87, Thr93, Arg104, and Asn114 together coordinate ATP. The Pros-phosphohistidine intermediate role is filled by His117.

It belongs to the NDK family. Mg(2+) serves as cofactor.

The enzyme catalyses a 2'-deoxyribonucleoside 5'-diphosphate + ATP = a 2'-deoxyribonucleoside 5'-triphosphate + ADP. It catalyses the reaction a ribonucleoside 5'-diphosphate + ATP = a ribonucleoside 5'-triphosphate + ADP. Functionally, major role in the synthesis of nucleoside triphosphates other than ATP. The ATP gamma phosphate is transferred to the NDP beta phosphate via a ping-pong mechanism, using a phosphorylated active-site intermediate. The protein is Nucleoside diphosphate kinase (NDK1) of Eremothecium gossypii (strain ATCC 10895 / CBS 109.51 / FGSC 9923 / NRRL Y-1056) (Yeast).